We begin with the raw amino-acid sequence, 104 residues long: Naphthalene 1,2-dioxygenase system, ferredoxin component (104 aa).

A Rieske domain is found at 6-101 (IEAVALSDIL…VKIENLRVMI (96 aa)). Positions 45, 47, 64, and 67 each coordinate [2Fe-2S] cluster.

This sequence belongs to the bacterial ring-hydroxylating dioxygenase ferredoxin component family. As to quaternary structure, the naphthalene dioxygenase (NDO) multicomponent enzyme system is composed of an electron transfer component and a dioxygenase component (iron sulfur protein (ISP)). The electron transfer component is composed of a ferredoxin reductase (NdoR) and a ferredoxin (NdoA), and the dioxygenase component is formed of a heterohexamer (trimer of heterodimers) of three large alpha subunits (NdoB) and three small beta subunits (NdoC). It depends on [2Fe-2S] cluster as a cofactor.

It participates in aromatic compound metabolism; naphthalene degradation. Functionally, component of the naphthalene dioxygenase (NDO) multicomponent enzyme system which catalyzes the incorporation of both atoms of molecular oxygen into naphthalene to form cis-(1R,2S)-dihydroxy-1,2-dihydronaphthalene. Functions as an intermediate electron transfer protein via a specific interaction with iron sulfur protein components (ISP) (NdoB and NdoC). Also able to catalyze the cis-dihydroxylation of biphenyl and phenanthrene. This is Naphthalene 1,2-dioxygenase system, ferredoxin component from Pseudomonas putida (Arthrobacter siderocapsulatus).